An 838-amino-acid chain; its full sequence is G-protein coupled receptor-associated sorting protein 2 (838 aa).

Disordered regions lie at residues 1–121, 218–293, and 531–552; these read MTGA…PGAR, ASNE…NPFS, and LELS…PSPE. Basic and acidic residues predominate over residues 13 to 31; it reads KPEKKAGEEVVAGPEREND. Over residues 220–235 the composition is skewed to polar residues; that stretch reads NESGFWSADETSTASS. The segment covering 255–271 has biased composition (basic residues); that stretch reads RSRHRAKHQTNPRSRPR. Residues Ser-282 and Ser-284 each carry the phosphoserine modification. Residues 542–552 are compositionally biased toward polar residues; the sequence is SLLQPDQPSPE.

This sequence belongs to the GPRASP family. As to quaternary structure, interacts with cytoplasmic tails of a variety of G protein-coupled receptors such as muscarinic acetylcholine receptor M1/CHRM1 and calcitonin receptor/CALCR.

May play a role in regulation of a variety of G-protein coupled receptors. This chain is G-protein coupled receptor-associated sorting protein 2 (GPRASP2), found in Pongo abelii (Sumatran orangutan).